A 114-amino-acid chain; its full sequence is Vesicle-associated membrane protein 2 (114 aa).

Residues 1–11 are compositionally biased toward pro residues; the sequence is MSAPAAGPPAA. A disordered region spans residues 1–31; the sequence is MSAPAAGPPAAAPGDGAPQGPPNLTSNRRLQ. Serine 2 carries the post-translational modification N-acetylserine. At 2-92 the chain is on the cytoplasmic side; sequence SAPAAGPPAA…KRKYWWKNMK (91 aa). Residues 29–89 enclose the v-SNARE coiled-coil homology domain; it reads RLQQTQAQVD…AKLKRKYWWK (61 aa). A helical; Anchor for type IV membrane protein membrane pass occupies residues 93 to 111; the sequence is MMIIMGVICAIILIIIIVY. Residues 112–114 are Vesicular-facing; it reads FST.

This sequence belongs to the synaptobrevin family.

It localises to the cytoplasmic vesicle. It is found in the secretory vesicle. The protein resides in the synaptic vesicle membrane. Its subcellular location is the cell membrane. Its function is as follows. Involved in the targeting and/or fusion of transport vesicles to their target membrane. Major SNARE protein of synaptic vesicles which mediates fusion of synaptic vesicles to release neurotransmitters. Essential for fast vesicular exocytosis and activity-dependent neurotransmitter release as well as fast endocytosis that mediates rapid reuse of synaptic vesicles. This Xenopus laevis (African clawed frog) protein is Vesicle-associated membrane protein 2 (vamp2).